The primary structure comprises 468 residues: Glycosyl hydrolase family 109 protein (468 aa).

The N-terminal stretch at Met1–Ala19 is a signal peptide. NAD(+) is bound by residues Met67 to Arg68, Asp89, Trp138 to His141, Glu158 to Val159, and Asn187. Substrate contacts are provided by residues Tyr216, Arg232, Tyr244–His247, and Tyr322. Position 244 (Tyr244) interacts with NAD(+).

The protein belongs to the Gfo/Idh/MocA family. Glycosyl hydrolase 109 subfamily. NAD(+) serves as cofactor.

Glycosidase. This is Glycosyl hydrolase family 109 protein from Porphyromonas gingivalis (strain ATCC BAA-308 / W83).